A 675-amino-acid chain; its full sequence is PML-RARA-regulated adapter molecule 1 (675 aa).

Residues 1–19 (MGSNQDFRNLQAKFQTSQP) are compositionally biased toward polar residues. Disordered stretches follow at residues 1-473 (MGSN…GPIN) and 523-562 (TDDSSISPRGRDEMLSTQQATRWPQQEPELRKKATQPQQL). The segment covering 23 to 35 (ELFRKTPKPELNK) has biased composition (basic and acidic residues). Residues 43 to 58 (TELSEQPKKSSQSELS) show a composition bias toward polar residues. A compositionally biased stretch (basic and acidic residues) spans 141–150 (PKPEFGELSK). Composition is skewed to polar residues over residues 224 to 242 (RKSQPQSESIEVSQTSPSK), 251 to 264 (HSPQPDISTFPKNN), and 322 to 331 (LQPSDLTRAS). Phosphoserine is present on serine 374. Polar residues predominate over residues 407–422 (SECSLPSASAGSSPQC). Residues 462 to 471 (PAKPALPPGP) show a composition bias toward pro residues. Residues 537–546 (LSTQQATRWP) are compositionally biased toward polar residues. In terms of domain architecture, SH3 spans 578-656 (KAEREFRKKF…PRTALLPLET (79 aa)).

Interacts with SKAP2, LCP2 and DBNL. May interact with LYN. Interacts with NEK6. In terms of processing, may be phosphorylated on tyrosines. Expressed in bone marrow and mature neutrophils. Weakly expressed in macrophages and mast cells.

Its function is as follows. May be involved in integrin signaling in neutrophils. Binds to PtdIns(4)P. The sequence is that of PML-RARA-regulated adapter molecule 1 (Pram1) from Mus musculus (Mouse).